The following is a 744-amino-acid chain: 3-isopropylmalate dehydratase (744 aa).

[4Fe-4S] cluster is bound by residues cysteine 341, cysteine 401, and cysteine 404.

The protein belongs to the aconitase/IPM isomerase family. As to quaternary structure, monomer. [4Fe-4S] cluster serves as cofactor.

The enzyme catalyses (2R,3S)-3-isopropylmalate = (2S)-2-isopropylmalate. It participates in amino-acid biosynthesis; L-leucine biosynthesis; L-leucine from 3-methyl-2-oxobutanoate: step 2/4. Its function is as follows. Catalyzes the isomerization between 2-isopropylmalate and 3-isopropylmalate, via the formation of 2-isopropylmaleate. This Phycomyces blakesleeanus (strain ATCC 8743b / DSM 1359 / FGSC 10004 / NBRC 33097 / NRRL 1555) protein is 3-isopropylmalate dehydratase (leu1).